The sequence spans 307 residues: Porphobilinogen deaminase (307 aa).

Position 239 is an S-(dipyrrolylmethanemethyl)cysteine (Cys239).

It belongs to the HMBS family. As to quaternary structure, monomer. The cofactor is dipyrromethane.

It carries out the reaction 4 porphobilinogen + H2O = hydroxymethylbilane + 4 NH4(+). The protein operates within porphyrin-containing compound metabolism; protoporphyrin-IX biosynthesis; coproporphyrinogen-III from 5-aminolevulinate: step 2/4. In terms of biological role, tetrapolymerization of the monopyrrole PBG into the hydroxymethylbilane pre-uroporphyrinogen in several discrete steps. The chain is Porphobilinogen deaminase from Campylobacter jejuni subsp. jejuni serotype O:23/36 (strain 81-176).